Consider the following 266-residue polypeptide: Putative hydro-lyase Jann_2570 (266 aa).

The protein belongs to the D-glutamate cyclase family.

The sequence is that of Putative hydro-lyase Jann_2570 from Jannaschia sp. (strain CCS1).